The following is a 394-amino-acid chain: 1-deoxy-D-xylulose 5-phosphate reductoisomerase (394 aa).

7 residues coordinate NADPH: Thr12, Gly13, Ser14, Ile15, Lys39, Gln40, and Asn126. Lys127 contributes to the 1-deoxy-D-xylulose 5-phosphate binding site. Position 128 (Glu128) interacts with NADPH. Asp152 contributes to the Mn(2+) binding site. Residues Ser153, Glu154, Ser183, and His206 each contribute to the 1-deoxy-D-xylulose 5-phosphate site. Glu154 contributes to the Mn(2+) binding site. Residue Gly212 coordinates NADPH. 1-deoxy-D-xylulose 5-phosphate-binding residues include Ser219, Asn224, Lys225, and Glu228. Glu228 lines the Mn(2+) pocket.

Belongs to the DXR family. Requires Mg(2+) as cofactor. Mn(2+) serves as cofactor.

The enzyme catalyses 2-C-methyl-D-erythritol 4-phosphate + NADP(+) = 1-deoxy-D-xylulose 5-phosphate + NADPH + H(+). It functions in the pathway isoprenoid biosynthesis; isopentenyl diphosphate biosynthesis via DXP pathway; isopentenyl diphosphate from 1-deoxy-D-xylulose 5-phosphate: step 1/6. In terms of biological role, catalyzes the NADPH-dependent rearrangement and reduction of 1-deoxy-D-xylulose-5-phosphate (DXP) to 2-C-methyl-D-erythritol 4-phosphate (MEP). The chain is 1-deoxy-D-xylulose 5-phosphate reductoisomerase from Neisseria meningitidis serogroup A / serotype 4A (strain DSM 15465 / Z2491).